Reading from the N-terminus, the 263-residue chain is Hydroxyethylthiazole kinase (263 aa).

Methionine 39 lines the substrate pocket. The ATP site is built by lysine 115 and threonine 160. Glycine 187 contacts substrate.

It belongs to the Thz kinase family. The cofactor is Mg(2+).

The enzyme catalyses 5-(2-hydroxyethyl)-4-methylthiazole + ATP = 4-methyl-5-(2-phosphooxyethyl)-thiazole + ADP + H(+). It participates in cofactor biosynthesis; thiamine diphosphate biosynthesis; 4-methyl-5-(2-phosphoethyl)-thiazole from 5-(2-hydroxyethyl)-4-methylthiazole: step 1/1. Catalyzes the phosphorylation of the hydroxyl group of 4-methyl-5-beta-hydroxyethylthiazole (THZ). The protein is Hydroxyethylthiazole kinase of Staphylococcus aureus (strain JH9).